A 439-amino-acid polypeptide reads, in one-letter code: Oxysterol-binding protein 6 (439 aa).

Disordered regions lie at residues 1 to 40 and 409 to 439; these read MSAKVASNKEAPLTEDSVSDLSSDGVEAEGVDQTENSGAD and ESSTPNLSKVDSSAKIENSIPVDNSIPQTTN. Composition is skewed to polar residues over residues 409–419 and 429–439; these read ESSTPNLSKVD and PVDNSIPQTTN.

The protein belongs to the OSBP family.

The sequence is that of Oxysterol-binding protein 6 (osbF) from Dictyostelium discoideum (Social amoeba).